We begin with the raw amino-acid sequence, 157 residues long: MLELDIQRATDAATPEDAALRRWCELALRQRSADSEMTIRLVDEAEGRELNHTYRHKDYATNVLSFPADVPDELLDIPLLGDLVICVAVVEREAAEQGKSLEAHWAHLVIHGCLHLLGYDHIEDEEAEEMESLERELLAELGHPDPYADDETDSITH.

Zn(2+) contacts are provided by H111, H115, and H121. A disordered region spans residues 136-157; it reads ELLAELGHPDPYADDETDSITH. Over residues 147–157 the composition is skewed to acidic residues; that stretch reads YADDETDSITH.

Belongs to the endoribonuclease YbeY family. Zn(2+) serves as cofactor.

The protein localises to the cytoplasm. Its function is as follows. Single strand-specific metallo-endoribonuclease involved in late-stage 70S ribosome quality control and in maturation of the 3' terminus of the 16S rRNA. The sequence is that of Endoribonuclease YbeY from Pseudomonas putida (strain ATCC 700007 / DSM 6899 / JCM 31910 / BCRC 17059 / LMG 24140 / F1).